Consider the following 154-residue polypeptide: Large ribosomal subunit protein bL9 (154 aa).

The protein belongs to the bacterial ribosomal protein bL9 family.

Binds to the 23S rRNA. This chain is Large ribosomal subunit protein bL9, found in Buchnera aphidicola subsp. Baizongia pistaciae (strain Bp).